The sequence spans 237 residues: Uridylate kinase (237 aa).

Residue 12–15 (KLSG) participates in ATP binding. The segment at 20–25 (GDEGFG) is involved in allosteric activation by GTP. Gly-54 is a UMP binding site. Residues Gly-55 and Arg-59 each coordinate ATP. UMP is bound by residues Asp-74 and 135-142 (TGSPFFTT). The ATP site is built by Thr-162, Tyr-168, and Asp-171.

It belongs to the UMP kinase family. Homohexamer.

It localises to the cytoplasm. The catalysed reaction is UMP + ATP = UDP + ADP. The protein operates within pyrimidine metabolism; CTP biosynthesis via de novo pathway; UDP from UMP (UMPK route): step 1/1. Its activity is regulated as follows. Allosterically activated by GTP. Inhibited by UTP. Its function is as follows. Catalyzes the reversible phosphorylation of UMP to UDP. This chain is Uridylate kinase, found in Mannheimia succiniciproducens (strain KCTC 0769BP / MBEL55E).